The following is a 225-amino-acid chain: UPF0173 metal-dependent hydrolase Aflv_0488 (225 aa).

This sequence belongs to the UPF0173 family.

In Anoxybacillus flavithermus (strain DSM 21510 / WK1), this protein is UPF0173 metal-dependent hydrolase Aflv_0488.